The chain runs to 373 residues: 2-oxoglutarate oxidoreductase subunit KorB (373 aa).

Residues 26–50 are disordered; that stretch reads TPSLTKNAGVPTTDQPQKGKDFTSD. Residues 27–41 show a composition bias toward polar residues; the sequence is PSLTKNAGVPTTDQP.

KG oxidoreductase (KOR) is composed of KorA and KorB subunits. It depends on Mg(2+) as a cofactor.

The enzyme catalyses 2 oxidized [2Fe-2S]-[ferredoxin] + 2-oxoglutarate + CoA = succinyl-CoA + 2 reduced [2Fe-2S]-[ferredoxin] + CO2 + H(+). The protein operates within carbohydrate metabolism; tricarboxylic acid cycle. In terms of biological role, component of KG oxidoreductase (KOR) that catalyzes the CoA-dependent oxidative decarboxylation of 2-oxoglutarate (alpha-ketoglutarate, KG) to succinyl-CoA. Methyl viologen can act as electron acceptor in vitro; the physiologic electron acceptor is unknown. Is involved in the alternative TCA pathway that functions concurrently with fatty acid beta-oxidation. Since a growing body of evidence indicates that lipids (for example cholesterol and fatty acids) are a predominant growth substrate for M.tuberculosis during infection, flux through KOR likely represents an important step in intermediary metabolism in vivo. KOR-dependent decarboxylation of KG also appears to be an important source of CO(2) in M.tuberculosis metabolism. This chain is 2-oxoglutarate oxidoreductase subunit KorB (korB), found in Mycobacterium tuberculosis (strain ATCC 25618 / H37Rv).